Here is a 287-residue protein sequence, read N- to C-terminus: tRNA (guanine(9)-N1)-methyltransferase (287 aa).

The interval methionine 1 to tryptophan 27 is disordered. The SAM-dependent MTase TRM10-type domain occupies glutamate 79–proline 272. Residues leucine 179–threonine 180, glycine 199, aspartate 203–histidine 207, cysteine 211, leucine 225, and lysine 237–leucine 239 contribute to the S-adenosyl-L-methionine site. Aspartate 203 acts as the Proton acceptor in catalysis. Residues arginine 268–glutamine 278 show a composition bias toward basic and acidic residues. Positions arginine 268–glutamine 287 are disordered.

This sequence belongs to the class IV-like SAM-binding methyltransferase superfamily. TRM10 family. As to quaternary structure, monomer.

Its subcellular location is the cytoplasm. The protein resides in the nucleus. The enzyme catalyses guanosine(9) in tRNA + S-adenosyl-L-methionine = N(1)-methylguanosine(9) in tRNA + S-adenosyl-L-homocysteine + H(+). In terms of biological role, S-adenosyl-L-methionine-dependent guanine N(1)-methyltransferase that catalyzes the formation of N(1)-methylguanine at position 9 (m1G9) in cytoplasmic tRNA. The protein is tRNA (guanine(9)-N1)-methyltransferase of Candida glabrata (strain ATCC 2001 / BCRC 20586 / JCM 3761 / NBRC 0622 / NRRL Y-65 / CBS 138) (Yeast).